The sequence spans 61 residues: Small ribosomal subunit protein uS14 (61 aa).

Residues C24, C27, C40, and C43 each coordinate Zn(2+).

The protein belongs to the universal ribosomal protein uS14 family. Zinc-binding uS14 subfamily. Part of the 30S ribosomal subunit. Contacts proteins S3 and S10. It depends on Zn(2+) as a cofactor.

Binds 16S rRNA, required for the assembly of 30S particles and may also be responsible for determining the conformation of the 16S rRNA at the A site. The polypeptide is Small ribosomal subunit protein uS14 (Finegoldia magna (strain ATCC 29328 / DSM 20472 / WAL 2508) (Peptostreptococcus magnus)).